The following is a 173-amino-acid chain: Mediator of RNA polymerase II transcription subunit 10 (173 aa).

Residues 1-10 show a composition bias toward low complexity; sequence MVQQQQQSQQ. The segment at 1-42 is disordered; that stretch reads MVQQQQQSQQRMMELHERNDREKLARKTEKEREEERRKQEDD. The span at 13–42 shows a compositional bias: basic and acidic residues; it reads MELHERNDREKLARKTEKEREEERRKQEDD.

It belongs to the Mediator complex subunit 10 family. As to quaternary structure, component of the Mediator complex.

The protein resides in the nucleus. Component of the Mediator complex, a coactivator involved in the regulated transcription of nearly all RNA polymerase II-dependent genes. Mediator functions as a bridge to convey information from gene-specific regulatory proteins to the basal RNA polymerase II transcription machinery. Mediator is recruited to promoters by direct interactions with regulatory proteins and serves as a scaffold for the assembly of a functional preinitiation complex with RNA polymerase II and the general transcription factors. Required for germ cell development and for transcriptional activation of certain stage-specific inducible promoters. The sequence is that of Mediator of RNA polymerase II transcription subunit 10 (mdt-10) from Caenorhabditis elegans.